The primary structure comprises 717 residues: Transport/processing ATP-binding protein ComA (717 aa).

Residues 11–138 (QVDQMDCGVA…EEWTGVTLFM (128 aa)) form the Peptidase C39 domain. The active site involves Cys17. 6 consecutive transmembrane segments (helical) span residues 166-186 (GLIANIVLATLLVTVINIVGS), 205-225 (LGIISIGLVIVYIFQQILSYA), 237-257 (LSIDVILSYIKHVFHLPMSFF), 282-302 (TILSIFLDVSTVVIISLVLFS), 306-326 (NLFFMTLLALPIYTVIIFAFM), and 397-417 (VAHLLLNVGILWMGAVLVMDG). The 283-residue stretch at 168–450 (IANIVLATLL…IINLQTKLQT (283 aa)) folds into the ABC transmembrane type-1 domain. The region spanning 484-717 (MTFKQVHYKY…GGFYAHLVNS (234 aa)) is the ABC transporter domain. 517–524 (GISGSGKT) serves as a coordination point for ATP.

Belongs to the ABC transporter superfamily. Competence factor exporter (TC 3.A.1.112.1) family.

Its subcellular location is the cell membrane. Required for induction of competence. Seems to transport the competence-stimulating peptide (CSP). The protein is Transport/processing ATP-binding protein ComA (comA) of Streptococcus pneumoniae serotype 4 (strain ATCC BAA-334 / TIGR4).